We begin with the raw amino-acid sequence, 264 residues long: MQQYLDLMRHVLEHGDRKTDRTGTGTVSVFGWQMRFRLAEGFPLLTTKKLHTRSIIHELLWFIRGDTNIRYLKDHGVSIWDEWADENGDLGPVYGKQWRRWETADGRSVDQLAQLIDGIKRNPDSRRHIVSAWNPGEVGSMALPPCHALFQFYVAGGRLSCQLYQRSADIFLGVPFNIASYALLTMMVAQVCDLEPGDFVWTGGDCHLYLNHLQQAEEQLQRTPYPLPRMILNPEVRDLFAFRFEDFTLEGYTAHPHIKAPVAV.

Arginine 21 serves as a coordination point for dUMP. Histidine 51 provides a ligand contact to (6R)-5,10-methylene-5,6,7,8-tetrahydrofolate. 126–127 (RR) contributes to the dUMP binding site. Residue cysteine 146 is the Nucleophile of the active site. DUMP contacts are provided by residues 166–169 (RSAD), asparagine 177, and 207–209 (HLY). Position 169 (aspartate 169) interacts with (6R)-5,10-methylene-5,6,7,8-tetrahydrofolate. Residue alanine 263 participates in (6R)-5,10-methylene-5,6,7,8-tetrahydrofolate binding.

The protein belongs to the thymidylate synthase family. Bacterial-type ThyA subfamily. As to quaternary structure, homodimer.

It is found in the cytoplasm. The enzyme catalyses dUMP + (6R)-5,10-methylene-5,6,7,8-tetrahydrofolate = 7,8-dihydrofolate + dTMP. Its pathway is pyrimidine metabolism; dTTP biosynthesis. Its function is as follows. Catalyzes the reductive methylation of 2'-deoxyuridine-5'-monophosphate (dUMP) to 2'-deoxythymidine-5'-monophosphate (dTMP) while utilizing 5,10-methylenetetrahydrofolate (mTHF) as the methyl donor and reductant in the reaction, yielding dihydrofolate (DHF) as a by-product. This enzymatic reaction provides an intracellular de novo source of dTMP, an essential precursor for DNA biosynthesis. The chain is Thymidylate synthase from Azoarcus sp. (strain BH72).